Here is a 241-residue protein sequence, read N- to C-terminus: Biosynthetic peptidoglycan transglycosylase (241 aa).

A helical membrane pass occupies residues 18-38; it reads GVIGIIALWMAGILIFAFLPV.

This sequence belongs to the glycosyltransferase 51 family.

It localises to the cell inner membrane. It catalyses the reaction [GlcNAc-(1-&gt;4)-Mur2Ac(oyl-L-Ala-gamma-D-Glu-L-Lys-D-Ala-D-Ala)](n)-di-trans,octa-cis-undecaprenyl diphosphate + beta-D-GlcNAc-(1-&gt;4)-Mur2Ac(oyl-L-Ala-gamma-D-Glu-L-Lys-D-Ala-D-Ala)-di-trans,octa-cis-undecaprenyl diphosphate = [GlcNAc-(1-&gt;4)-Mur2Ac(oyl-L-Ala-gamma-D-Glu-L-Lys-D-Ala-D-Ala)](n+1)-di-trans,octa-cis-undecaprenyl diphosphate + di-trans,octa-cis-undecaprenyl diphosphate + H(+). Its pathway is cell wall biogenesis; peptidoglycan biosynthesis. Its function is as follows. Peptidoglycan polymerase that catalyzes glycan chain elongation from lipid-linked precursors. In Yersinia pseudotuberculosis serotype O:3 (strain YPIII), this protein is Biosynthetic peptidoglycan transglycosylase.